The following is a 349-amino-acid chain: Anthranilate phosphoribosyltransferase (349 aa).

5-phospho-alpha-D-ribose 1-diphosphate is bound by residues glycine 82, 85–86 (GD), 92–95 (NVST), 110–118 (KHGNRAVSG), and serine 122. Glycine 82 lines the anthranilate pocket. Residue serine 94 coordinates Mg(2+). Residue asparagine 113 participates in anthranilate binding. Arginine 168 lines the anthranilate pocket. Residues aspartate 227 and glutamate 228 each coordinate Mg(2+).

It belongs to the anthranilate phosphoribosyltransferase family. In terms of assembly, homodimer. Mg(2+) serves as cofactor.

It catalyses the reaction N-(5-phospho-beta-D-ribosyl)anthranilate + diphosphate = 5-phospho-alpha-D-ribose 1-diphosphate + anthranilate. Its pathway is amino-acid biosynthesis; L-tryptophan biosynthesis; L-tryptophan from chorismate: step 2/5. Its function is as follows. Catalyzes the transfer of the phosphoribosyl group of 5-phosphorylribose-1-pyrophosphate (PRPP) to anthranilate to yield N-(5'-phosphoribosyl)-anthranilate (PRA). The chain is Anthranilate phosphoribosyltransferase from Pseudomonas putida (strain ATCC 47054 / DSM 6125 / CFBP 8728 / NCIMB 11950 / KT2440).